A 588-amino-acid polypeptide reads, in one-letter code: Protein gamma response 1 (588 aa).

2 coiled-coil regions span residues 64–104 (AACD…LGKT) and 164–281 (SEVK…KTVV). Basic and acidic residues-rich tracts occupy residues 377-389 (KHSETAEGADKVR), 465-484 (NVKRVAGEEKHVHDVAKKDD), and 508-525 (TSKKSFKHVESVRKKAER). Disordered stretches follow at residues 377–398 (KHSETAEGADKVRIGTGSSGNN) and 417–525 (PIVR…KAER).

In terms of tissue distribution, basal levels in mitotically dividing cells (meristems), and high levels in endoreduplicating cells (stipules, trichomes) (at protein level).

Its subcellular location is the nucleus. Its function is as follows. Seems to mediate cell cycle arrest before mitosis in response to DNA damage. Is probably also involved in the transition from mitosis to endoreduplication. This Arabidopsis thaliana (Mouse-ear cress) protein is Protein gamma response 1 (GR1).